We begin with the raw amino-acid sequence, 293 residues long: Shikimate dehydrogenase (NADP(+)) (293 aa).

Residues 26-28 (SKS) and T73 contribute to the shikimate site. The active-site Proton acceptor is the K77. E89 lines the NADP(+) pocket. Shikimate contacts are provided by N98 and D113. Residues 137–141 (GAGGA), 161–166 (NRTRQR), and I231 each bind NADP(+). Y233 is a binding site for shikimate. NADP(+) is bound at residue G254.

It belongs to the shikimate dehydrogenase family. Homodimer.

It catalyses the reaction shikimate + NADP(+) = 3-dehydroshikimate + NADPH + H(+). The protein operates within metabolic intermediate biosynthesis; chorismate biosynthesis; chorismate from D-erythrose 4-phosphate and phosphoenolpyruvate: step 4/7. In terms of biological role, involved in the biosynthesis of the chorismate, which leads to the biosynthesis of aromatic amino acids. Catalyzes the reversible NADPH linked reduction of 3-dehydroshikimate (DHSA) to yield shikimate (SA). This is Shikimate dehydrogenase (NADP(+)) from Bartonella quintana (strain Toulouse) (Rochalimaea quintana).